The sequence spans 1149 residues: Transforming acidic coiled-coil-containing protein 2 (1149 aa).

Disordered stretches follow at residues 1–73 (MGNE…GSNQ), 91–227 (SASP…ASSG), and 247–430 (PCSA…VPLT). The segment covering 13-35 (TSSVQSPRSLQPPGKSQSLQKQQ) has biased composition (polar residues). Positions 91-106 (SASPSAARASPAPLAP) are enriched in low complexity. Ser-100 carries the post-translational modification Phosphoserine. Residues 155–180 (KAPPAPPPPPPEVTPEPEVIDPPAPE) are compositionally biased toward pro residues. Ser-265 is modified (phosphoserine). Composition is skewed to polar residues over residues 267-284 (ESVPPSKSTLSRSLSLQA) and 300-317 (TLTTDACGTGSNSASSTL). Residues 318 to 334 (KRTKKTRPPSLKKKQAT) are compositionally biased toward basic residues. Ser-354 is modified (phosphoserine). Residues 358-368 (SEEHLAPETKT) show a composition bias toward basic and acidic residues. The residue at position 419 (Ser-419) is a Phosphoserine. Thr-439 is subject to Phosphothreonine. Residues 463–617 (SEDKGSWESQ…PAKKKKTPLK (155 aa)) are disordered. The span at 481–498 (KIGKKPVAKMPLRRPKMK) shows a compositional bias: basic residues. The region spanning 508–596 (PASPPRSPTE…SPASFEIPAS (89 aa)) is the SPAZ domain. 2 positions are modified to phosphoserine: Ser-510 and Ser-514. Thr-516 is subject to Phosphothreonine. Positions 541–561 (NPFSSTSKMQESPKLSQQSYN) are enriched in polar residues. Ser-552, Ser-582, Ser-585, Ser-587, and Ser-596 each carry phosphoserine. Residues 575–590 (KASSKTPSSPSKSPAS) are compositionally biased toward low complexity. A phosphothreonine mark is found at Thr-632, Thr-653, and Thr-657. Disordered stretches follow at residues 636–665 (KKSPKRSPLSDPPSQDPTPAATPEAPSAIS) and 696–719 (DFPQPSDLSNFVNETKFNSPSEEL). The segment covering 652–665 (PTPAATPEAPSAIS) has biased composition (low complexity). Polar residues predominate over residues 701–716 (SDLSNFVNETKFNSPS). Residues Ser-714 and Ser-736 each carry the phosphoserine modification. Position 755 is a phosphothreonine (Thr-755). Residues 756 to 780 (PQESPVKSPPVRMSDSPTPCSGSSF) form a disordered region. 2 positions are modified to phosphoserine: Ser-759 and Ser-771. The segment covering 770 to 780 (DSPTPCSGSSF) has biased composition (polar residues). Coiled-coil stretches lie at residues 877-905 (AQKLQEELEFAVMRIEALKLARQIALASR) and 948-1148 (DLDS…KMGK).

The protein belongs to the TACC family. As to quaternary structure, interacts with microtubules. Interacts with YEATS4, GCN5L2 and PCAF. Interacts with CCDC100/CEP120. In terms of processing, phosphorylated; which is required for localization in centrosome. In terms of tissue distribution, expressed in brain, kidney, lung, thymus and ovary. Not detectable in normal tissues at protein level.

Its subcellular location is the cytoplasm. The protein localises to the nucleus. It is found in the cytoskeleton. The protein resides in the microtubule organizing center. It localises to the centrosome. Functionally, plays a role in the microtubule-dependent coupling of the nucleus and the centrosome. Involved in the processes that regulate centrosome-mediated interkinetic nuclear migration (INM) of neural progenitors. May play a role in organizing centrosomal microtubules. The sequence is that of Transforming acidic coiled-coil-containing protein 2 (Tacc2) from Mus musculus (Mouse).